Here is a 118-residue protein sequence, read N- to C-terminus: Holo-[acyl-carrier-protein] synthase (118 aa).

Residues Asp-8 and Glu-60 each coordinate Mg(2+).

This sequence belongs to the P-Pant transferase superfamily. AcpS family. Mg(2+) is required as a cofactor.

Its subcellular location is the cytoplasm. The catalysed reaction is apo-[ACP] + CoA = holo-[ACP] + adenosine 3',5'-bisphosphate + H(+). In terms of biological role, transfers the 4'-phosphopantetheine moiety from coenzyme A to a Ser of acyl-carrier-protein. In Wolbachia sp. subsp. Drosophila simulans (strain wRi), this protein is Holo-[acyl-carrier-protein] synthase.